The primary structure comprises 332 residues: Trans-2'-carboxybenzalpyruvate hydratase-aldolase (332 aa).

The active-site Schiff-base intermediate with substrate is K178.

It belongs to the DapA family. In terms of assembly, homotrimer.

The catalysed reaction is (3Z)-4-(2-carboxyphenyl)-2-oxobut-3-enoate + H2O = 2-formylbenzoate + pyruvate. Its activity is regulated as follows. Not inhibited by sodium borohydride or sodium pyruvate. Unaffected by EDTA, EGTA, Mn(2+), Mg(2+) and Ca(2+). Functionally, plays a role in phenanthrene catabolism. Catalyzes the transformation of trans-2'-carboxbenzalpyruvate to 2-formylbenzoate and pyruvate. The sequence is that of Trans-2'-carboxybenzalpyruvate hydratase-aldolase from Nocardioides sp. (strain KP7).